A 488-amino-acid polypeptide reads, in one-letter code: Envelope glycoprotein gp62 (488 aa).

The N-terminal stretch at Met-1–Gly-20 is a signal peptide. Over Asp-21–Ala-442 the chain is Extracellular. Residues Asn-140 and Asn-222 are each glycosylated (N-linked (GlcNAc...) asparagine; by host). Residues Cys-225–Cys-228 carry the CXXC motif. Cystine bridges form between Cys-225–Cys-228, Cys-225–Cys-401, and Cys-393–Cys-400. Residues Asn-244 and Asn-272 are each glycosylated (N-linked (GlcNAc...) asparagine; by host). Residues Ala-313–Gly-333 form a fusion peptide region. A gly-rich region spans residues Gly-327–Ser-339. Coiled-coil stretches lie at residues Leu-340–Leu-385 and Gln-397–Leu-429. The immunosuppression stretch occupies residues Ala-376–Leu-392. The CX6CC motif lies at Cys-393 to Cys-401. A glycan (N-linked (GlcNAc...) asparagine; by host) is linked at Asn-404. A helical transmembrane segment spans residues Leu-443–Ile-463. The S-palmitoyl cysteine; by host moiety is linked to residue Cys-462. Over Leu-464–Leu-488 the chain is Cytoplasmic.

In terms of assembly, the mature envelope protein (Env) consists of a trimer of SU-TM heterodimers attached by a labile interchain disulfide bond. Post-translationally, specific enzymatic cleavages in vivo yield mature proteins. Envelope glycoproteins are synthesized as an inactive precursor that is N-glycosylated and processed likely by host cell furin or by a furin-like protease in the Golgi to yield the mature SU and TM proteins. The cleavage site between SU and TM requires the minimal sequence [KR]-X-[KR]-R. The CXXC motif is highly conserved across a broad range of retroviral envelope proteins. It is thought to participate in the formation of a labile disulfide bond possibly with the CX6CC motif present in the transmembrane protein. Isomerization of the intersubunit disulfide bond to an SU intrachain disulfide bond is thought to occur upon receptor recognition in order to allow membrane fusion. In terms of processing, the transmembrane protein is palmitoylated.

The protein localises to the virion membrane. It is found in the host cell membrane. The surface protein (SU) attaches the virus to the host cell by binding to its receptor. This interaction triggers the refolding of the transmembrane protein (TM) and is thought to activate its fusogenic potential by unmasking its fusion peptide. Fusion occurs at the host cell plasma membrane. Functionally, the transmembrane protein (TM) acts as a class I viral fusion protein. Under the current model, the protein has at least 3 conformational states: pre-fusion native state, pre-hairpin intermediate state, and post-fusion hairpin state. During viral and target cell membrane fusion, the coiled coil regions (heptad repeats) assume a trimer-of-hairpins structure, positioning the fusion peptide in close proximity to the C-terminal region of the ectodomain. The formation of this structure appears to drive apposition and subsequent fusion of viral and target cell membranes. Membranes fusion leads to delivery of the nucleocapsid into the cytoplasm. The sequence is that of Envelope glycoprotein gp62 (env) from Human T-cell leukemia virus 1 (strain Japan MT-2 subtype A) (HTLV-1).